The following is a 204-amino-acid chain: MTRAFDGDTLLIATHNKGKLEEMAHLLQPFGVKVVGAAEMNLPEPEETEDTFVGNARIKAHAAARATGLPALSDDSGITIDALDGAPGVYTADWAETGNGRDFLMAMTRAHDALEAKSAPHPRLAQFRCTLVLAWPDGHDEVFEGVAPGHLVWPIRGAAGFGYDPMFVPEGYDVTFAEMDRWEKNKISHRARAVEKFVKGCFGG.

Substrate is bound at residue 14–19 (THNKGK). Mg(2+) is bound by residues glutamate 46 and aspartate 75. Catalysis depends on aspartate 75, which acts as the Proton acceptor. Substrate contacts are provided by residues serine 76, 161-164 (FGYD), lysine 184, and 189-190 (HR).

It belongs to the HAM1 NTPase family. Homodimer. Mg(2+) is required as a cofactor.

The catalysed reaction is XTP + H2O = XMP + diphosphate + H(+). The enzyme catalyses dITP + H2O = dIMP + diphosphate + H(+). It catalyses the reaction ITP + H2O = IMP + diphosphate + H(+). Functionally, pyrophosphatase that catalyzes the hydrolysis of nucleoside triphosphates to their monophosphate derivatives, with a high preference for the non-canonical purine nucleotides XTP (xanthosine triphosphate), dITP (deoxyinosine triphosphate) and ITP. Seems to function as a house-cleaning enzyme that removes non-canonical purine nucleotides from the nucleotide pool, thus preventing their incorporation into DNA/RNA and avoiding chromosomal lesions. The polypeptide is dITP/XTP pyrophosphatase (Ruegeria pomeroyi (strain ATCC 700808 / DSM 15171 / DSS-3) (Silicibacter pomeroyi)).